The chain runs to 134 residues: Fluoride-specific ion channel FluC 2 (134 aa).

4 helical membrane-spanning segments follow: residues 8–28, 40–60, 69–89, and 99–119; these read IVAI…LNTW, IENI…LVIV, LGVG…DSVL, and LIYV…GYLL. Gly75 and Thr78 together coordinate Na(+).

The protein belongs to the fluoride channel Fluc/FEX (TC 1.A.43) family.

The protein resides in the cell membrane. The catalysed reaction is fluoride(in) = fluoride(out). With respect to regulation, na(+) is not transported, but it plays an essential structural role and its presence is essential for fluoride channel function. Functionally, fluoride-specific ion channel. Important for reducing fluoride concentration in the cell, thus reducing its toxicity. The sequence is that of Fluoride-specific ion channel FluC 2 from Halalkalibacterium halodurans (strain ATCC BAA-125 / DSM 18197 / FERM 7344 / JCM 9153 / C-125) (Bacillus halodurans).